A 900-amino-acid chain; its full sequence is 3'-5' exonuclease DinG (900 aa).

An Exonuclease domain is found at 8-161 (VVDLETTGNQ…DEDATTTALL (154 aa)). Positions 241 to 496 (SEVVKSLNLT…KAIDKLEQQR (256 aa)) constitute a Helicase ATP-binding domain. 276-283 (APLGSGKS) provides a ligand contact to ATP. Positions 448–451 (DEAH) match the DEAH box motif. Residues 713 to 893 (DYIQEYVTIT…QFSKLVNKIQ (181 aa)) form the Helicase C-terminal domain.

The protein belongs to the helicase family. DinG subfamily. Type 2 sub-subfamily.

Its function is as follows. 3'-5' exonuclease. This chain is 3'-5' exonuclease DinG, found in Staphylococcus haemolyticus (strain JCSC1435).